The following is a 911-amino-acid chain: Protein translocase subunit SecA (911 aa).

ATP-binding positions include Gln-87, 105–109, and Asp-512; that span reads GEGKT. The interval 861-893 is disordered; the sequence is APGLESEQLSEEGAEVAVASAPVRNDQKLGRNE. Positions 895, 897, 906, and 907 each coordinate Zn(2+).

This sequence belongs to the SecA family. As to quaternary structure, monomer and homodimer. Part of the essential Sec protein translocation apparatus which comprises SecA, SecYEG and auxiliary proteins SecDF-YajC and YidC. Requires Zn(2+) as cofactor.

It is found in the cell inner membrane. Its subcellular location is the cytoplasm. The catalysed reaction is ATP + H2O + cellular proteinSide 1 = ADP + phosphate + cellular proteinSide 2.. Functionally, part of the Sec protein translocase complex. Interacts with the SecYEG preprotein conducting channel. Has a central role in coupling the hydrolysis of ATP to the transfer of proteins into and across the cell membrane, serving both as a receptor for the preprotein-SecB complex and as an ATP-driven molecular motor driving the stepwise translocation of polypeptide chains across the membrane. The protein is Protein translocase subunit SecA of Pseudomonas putida (strain ATCC 700007 / DSM 6899 / JCM 31910 / BCRC 17059 / LMG 24140 / F1).